Reading from the N-terminus, the 362-residue chain is uncharacterized protein (362 aa).

This is an uncharacterized protein from Caenorhabditis elegans.